We begin with the raw amino-acid sequence, 286 residues long: Pantothenate synthetase (286 aa).

Position 30–37 (30–37 (MGALHEGH)) interacts with ATP. Catalysis depends on His37, which acts as the Proton donor. Position 61 (Gln61) interacts with (R)-pantoate. Gln61 is a binding site for beta-alanine. 147-150 (GEKD) contacts ATP. Gln153 serves as a coordination point for (R)-pantoate. ATP is bound by residues Leu176 and 184 to 187 (HSSR).

This sequence belongs to the pantothenate synthetase family. As to quaternary structure, homodimer.

It is found in the cytoplasm. The enzyme catalyses (R)-pantoate + beta-alanine + ATP = (R)-pantothenate + AMP + diphosphate + H(+). Its pathway is cofactor biosynthesis; (R)-pantothenate biosynthesis; (R)-pantothenate from (R)-pantoate and beta-alanine: step 1/1. In terms of biological role, catalyzes the condensation of pantoate with beta-alanine in an ATP-dependent reaction via a pantoyl-adenylate intermediate. This is Pantothenate synthetase from Bartonella tribocorum (strain CIP 105476 / IBS 506).